A 219-amino-acid chain; its full sequence is UPF0502 protein GSU0233 (219 aa).

The protein belongs to the UPF0502 family.

This chain is UPF0502 protein GSU0233, found in Geobacter sulfurreducens (strain ATCC 51573 / DSM 12127 / PCA).